The primary structure comprises 156 residues: Small ribosomal subunit protein uS7 (156 aa).

It belongs to the universal ribosomal protein uS7 family. Part of the 30S ribosomal subunit. Contacts proteins S9 and S11.

Its function is as follows. One of the primary rRNA binding proteins, it binds directly to 16S rRNA where it nucleates assembly of the head domain of the 30S subunit. Is located at the subunit interface close to the decoding center, probably blocks exit of the E-site tRNA. In Aromatoleum aromaticum (strain DSM 19018 / LMG 30748 / EbN1) (Azoarcus sp. (strain EbN1)), this protein is Small ribosomal subunit protein uS7.